The primary structure comprises 23 residues: Pseudin-3 (23 aa).

In terms of tissue distribution, expressed by the skin glands.

The protein localises to the secreted. Its function is as follows. Possesses antifungal activity against C.albicans and is also active against E.coli and S.aureus. This is Pseudin-3 from Pseudis paradoxa (Paradoxical frog).